We begin with the raw amino-acid sequence, 452 residues long: Gastrin/cholecystokinin type B receptor (452 aa).

The Extracellular portion of the chain corresponds to 1-55 (MELVKLNRSVQGSGPVASLCRPGGPLLNNSGTGNLSCEPPRIRGAGTRELELAIR). N-linked (GlcNAc...) asparagine glycans are attached at residues Asn-7, Asn-28, and Asn-34. A helical membrane pass occupies residues 56–77 (VTLYAVIFLMSVGGNILIIVVL). Over 78-85 (GLSRRLRT) the chain is Cytoplasmic. Residues 86–107 (VTNAFLLSLAVSDLLLAVACMP) form a helical membrane-spanning segment. At 108 to 129 (FTLLPNLMGTFIFGTVICKAVS) the chain is on the extracellular side. The cysteines at positions 125 and 203 are disulfide-linked. The chain crosses the membrane as a helical span at residues 130 to 148 (YLMGVSVSVSTLSLVAIAL). Over 149–168 (ERYSAICRPLQARVWQTRSH) the chain is Cytoplasmic. Residues 169–187 (AARVILATWLLSGLLMVPY) form a helical membrane-spanning segment. The Extracellular segment spans residues 188–217 (PVYTAVQPVGPRVLQCVHRWPSARVRQTWS). The helical transmembrane segment at 218–240 (VLLLLLLFFVPGVVMAVAYGLIS) threads the bilayer. At 241–338 (RELYLGLRFD…KLLAKKRVVR (98 aa)) the chain is on the cytoplasmic side. The segment at 255–285 (SESQSRVRGQGGLPGGAAPGPVHQNGRCRPE) is disordered. Residues 263–272 (GQGGLPGGAA) show a composition bias toward gly residues. Residues 339 to 360 (MLLVIVVLFFMCWLPVYSANTW) form a helical membrane-spanning segment. Over 361 to 378 (RAFDGPGAHRALSGAPIS) the chain is Extracellular. The helical transmembrane segment at 379–399 (FIHLLSYASACVNPLVYCFMH) threads the bilayer. The Cytoplasmic segment spans residues 400–452 (RRFRQACLDTCARCCPRPPRARPRPLPDEDPPTPSIASLSRLSYTTISTLGPG). A lipid anchor (S-palmitoyl cysteine) is attached at Cys-413.

Belongs to the G-protein coupled receptor 1 family.

It is found in the cell membrane. In terms of biological role, receptor for gastrin and cholecystokinin. The CCK-B receptors occur throughout the central nervous system where they modulate anxiety, analgesia, arousal, and neuroleptic activity. This receptor mediates its action by association with G proteins that activate a phosphatidylinositol-calcium second messenger system. In Oryctolagus cuniculus (Rabbit), this protein is Gastrin/cholecystokinin type B receptor (CCKBR).